The sequence spans 637 residues: Sterol 3-beta-glucosyltransferase UGT80A2 (637 aa).

Disordered regions lie at residues Met1–Val29 and Val66–Gln112. The span at Ser13 to Ser24 shows a compositional bias: low complexity. The segment covering Ala67–Arg79 has biased composition (polar residues). The segment covering Arg103–Gln112 has biased composition (basic and acidic residues).

This sequence belongs to the glycosyltransferase 28 family. Expressed in roots, cauline leaf epidermal cells, stomata, stamen, pollen and around the base of siliques.

The catalysed reaction is a sterol + UDP-alpha-D-glucose = a sterol 3-beta-D-glucoside + UDP + H(+). Functionally, involved in the biosynthesis of sterol glucosides. Catalyzes the synthesis of steryl glycosides (SGs) and acyl steryl glycosides (ASGs) which are the most abundant sterol derivatives in higher plants. Can act on several sterols like sitosterol, campesterol and stigmasterol. Both UGT80A2 and UGT80B1 are required for the normal production of SGs and ASGs in seeds. The chain is Sterol 3-beta-glucosyltransferase UGT80A2 (UGT80A2) from Arabidopsis thaliana (Mouse-ear cress).